The primary structure comprises 334 residues: BTB and MATH domain-containing protein 39 (334 aa).

One can recognise an MATH domain in the interval 14-141 (IVTLVFNIYN…EGRFQIEFDL (128 aa)). The 66-residue stretch at 164-229 (ADGELITDGK…LQLDSFEVSV (66 aa)) folds into the BTB domain.

In Caenorhabditis elegans, this protein is BTB and MATH domain-containing protein 39 (bath-39).